A 173-amino-acid chain; its full sequence is Ribulose bisphosphate carboxylase small subunit, chloroplastic 7 (173 aa).

The transit peptide at 1–49 (MASIPATVATVAQANMVAPFTGLKSNAAFPVTKKVNDFSTLASNGGRVQ) directs the protein to the chloroplast.

This sequence belongs to the RuBisCO small chain family. As to quaternary structure, heterohexadecamer of 8 large and 8 small subunits.

The protein localises to the plastid. The protein resides in the chloroplast. In terms of biological role, ruBisCO catalyzes two reactions: the carboxylation of D-ribulose 1,5-bisphosphate, the primary event in carbon dioxide fixation, as well as the oxidative fragmentation of the pentose substrate. Both reactions occur simultaneously and in competition at the same active site. Although the small subunit is not catalytic it is essential for maximal activity. This Flaveria pringlei protein is Ribulose bisphosphate carboxylase small subunit, chloroplastic 7.